The sequence spans 234 residues: Leucyl/phenylalanyl-tRNA--protein transferase (234 aa).

It belongs to the L/F-transferase family.

It localises to the cytoplasm. It carries out the reaction N-terminal L-lysyl-[protein] + L-leucyl-tRNA(Leu) = N-terminal L-leucyl-L-lysyl-[protein] + tRNA(Leu) + H(+). The catalysed reaction is N-terminal L-arginyl-[protein] + L-leucyl-tRNA(Leu) = N-terminal L-leucyl-L-arginyl-[protein] + tRNA(Leu) + H(+). The enzyme catalyses L-phenylalanyl-tRNA(Phe) + an N-terminal L-alpha-aminoacyl-[protein] = an N-terminal L-phenylalanyl-L-alpha-aminoacyl-[protein] + tRNA(Phe). Functions in the N-end rule pathway of protein degradation where it conjugates Leu, Phe and, less efficiently, Met from aminoacyl-tRNAs to the N-termini of proteins containing an N-terminal arginine or lysine. This is Leucyl/phenylalanyl-tRNA--protein transferase from Shigella flexneri serotype 5b (strain 8401).